The chain runs to 476 residues: Xylan O-acetyltransferase 4 (476 aa).

A disordered region spans residues Met1–Ser37. Residues Met1–Pro63 lie on the Cytoplasmic side of the membrane. Residues Ser8–Thr18 are compositionally biased toward low complexity. Residues Ser19–Ala31 are compositionally biased toward pro residues. Residues Val64 to Gly80 form a helical; Signal-anchor for type II membrane protein membrane-spanning segment. Topologically, residues Glu81–Gln476 are lumenal. Asn103, Asn128, and Asn167 each carry an N-linked (GlcNAc...) asparagine glycan. Disulfide bonds link Cys117-Cys168, Cys139-Cys204, Cys148-Cys444, and Cys360-Cys440. The GDS motif motif lies at Gly191–Ser193. Ser193 acts as the Nucleophile in catalysis. N-linked (GlcNAc...) asparagine glycosylation is found at Asn299 and Asn369. Asp439 (proton donor) is an active-site residue. Residues Asp439–His442 carry the DXXH motif motif. The active-site Proton acceptor is His442.

It belongs to the PC-esterase family. TBL subfamily. In terms of tissue distribution, highly expressed in leaves. Expressed in roots, stems and inflorescences.

Its subcellular location is the golgi apparatus membrane. Its function is as follows. Xylan acetyltransferase required for 2-O- and 3-O-monoacetylation of xylosyl residues in xylan. Catalyzes the 2-O-acetylation of xylan, followed by nonenzymatic acetyl migration to the O-3 position, resulting in products that are monoacetylated at both O-2 and O-3 positions. The sequence is that of Xylan O-acetyltransferase 4 from Oryza sativa subsp. japonica (Rice).